Here is a 459-residue protein sequence, read N- to C-terminus: MSSGRIVQIIGAVIDVEFPRDSVPSIYNALEVQSAAGTTLEVQQQLGDGVVRTIAMGSTEGLKRGLEVTDSGAAISVPVGKATLGRIMDVLGNPIDEAGPIATEERWGIHRPAPSFAEQAGGNDLLETGIKVIDLVCPFTKGGKVGLFGGAGVGKTVNMMELIRNIAIEHSGYSVFAGVGERTREGNDFYHEMKDSNVLDKVALVYGQMNEPPGNRLRVALTGLTMAEKFRDEGNDVLLFVDNIYRYTLAGTEVSALLGRMPSAVGYQPTLAEEMGTLQERITSTKNGSITSIQAVYVPADDLTDPSPATTFAHLDATVVLSRDIASLGIYPAVDPLDSTSRQLDPNVIGQEHYDTARGVQYVLQRYKELKDIIAILGMDELSETDKQLVNRARKIQRFLSQPFFVAEVFTGASGKYVSLKDTIAGFKGILNGDYDHLPEQAFYMVGGIEEAIEKAKKL.

Gly-149 to Thr-156 is a binding site for ATP.

Belongs to the ATPase alpha/beta chains family. F-type ATPases have 2 components, CF(1) - the catalytic core - and CF(0) - the membrane proton channel. CF(1) has five subunits: alpha(3), beta(3), gamma(1), delta(1), epsilon(1). CF(0) has three main subunits: a(1), b(2) and c(9-12). The alpha and beta chains form an alternating ring which encloses part of the gamma chain. CF(1) is attached to CF(0) by a central stalk formed by the gamma and epsilon chains, while a peripheral stalk is formed by the delta and b chains.

The protein localises to the cell inner membrane. The enzyme catalyses ATP + H2O + 4 H(+)(in) = ADP + phosphate + 5 H(+)(out). Its function is as follows. Produces ATP from ADP in the presence of a proton gradient across the membrane. The catalytic sites are hosted primarily by the beta subunits. This Pseudomonas savastanoi pv. phaseolicola (strain 1448A / Race 6) (Pseudomonas syringae pv. phaseolicola (strain 1448A / Race 6)) protein is ATP synthase subunit beta.